The primary structure comprises 673 residues: DNA mismatch repair protein MutL (673 aa).

This sequence belongs to the DNA mismatch repair MutL/HexB family.

Functionally, this protein is involved in the repair of mismatches in DNA. It is required for dam-dependent methyl-directed DNA mismatch repair. May act as a 'molecular matchmaker', a protein that promotes the formation of a stable complex between two or more DNA-binding proteins in an ATP-dependent manner without itself being part of a final effector complex. The polypeptide is DNA mismatch repair protein MutL (Ehrlichia chaffeensis (strain ATCC CRL-10679 / Arkansas)).